Reading from the N-terminus, the 354-residue chain is Serum paraoxonase/lactonase 3 (354 aa).

Cysteine 42 and cysteine 352 are oxidised to a cystine. An N-linked (GlcNAc...) asparagine glycan is attached at asparagine 50. 2 residues coordinate Ca(2+): glutamate 53 and aspartate 54. Histidine 114 serves as the catalytic Proton acceptor. Isoleucine 116 serves as a coordination point for Ca(2+). Serine 165 is subject to Phosphoserine. Positions 167, 168, 223, 268, and 269 each coordinate Ca(2+). Residues asparagine 269 and asparagine 323 are each glycosylated (N-linked (GlcNAc...) asparagine).

Belongs to the paraoxonase family. Homodimer. The cofactor is Ca(2+). Glycosylated. In terms of processing, the signal sequence is not cleaved.

It is found in the secreted. It localises to the extracellular space. The enzyme catalyses a phenyl acetate + H2O = a phenol + acetate + H(+). The catalysed reaction is An aryl dialkyl phosphate + H2O = dialkyl phosphate + an aryl alcohol.. It catalyses the reaction an N-acyl-L-homoserine lactone + H2O = an N-acyl-L-homoserine + H(+). Has low activity towards the organophosphate paraxon and aromatic carboxylic acid esters. Rapidly hydrolyzes lactones such as statin prodrugs (e.g. lovastatin). Hydrolyzes aromatic lactones and 5- or 6-member ring lactones with aliphatic substituents but not simple lactones or those with polar substituents. The sequence is that of Serum paraoxonase/lactonase 3 (Pon3) from Rattus norvegicus (Rat).